The following is a 453-amino-acid chain: GTPase Der (453 aa).

EngA-type G domains follow at residues 4-169 and 177-352; these read PIVA…PTQG and TKIA…NEYQ. Residues 10–17, 57–61, 120–123, 183–190, 230–234, and 295–298 contribute to the GTP site; these read GRPNVGKS, DTGGL, NKCE, DTAGI, and NKWD. In terms of domain architecture, KH-like spans 353–438; that stretch reads RRVTTSVINE…PIRLLWRGKK (86 aa).

The protein belongs to the TRAFAC class TrmE-Era-EngA-EngB-Septin-like GTPase superfamily. EngA (Der) GTPase family. As to quaternary structure, associates with the 50S ribosomal subunit.

Its function is as follows. GTPase that plays an essential role in the late steps of ribosome biogenesis. The chain is GTPase Der from Trichodesmium erythraeum (strain IMS101).